The primary structure comprises 1230 residues: MASASYHISNLLEKMTSSDKDFRFMATNDLMTELQKDSIKLDDDSERKVVKMILRLLEDKNGEVQNLAVKCLGPLVSKVKEYQVETIVDTLCTNMLSDKEQLRDISSIGLKTVIGELPPASSGSALAANVCKKITGRLTSAIAKQEDVSVQLEALDIMADMLSRQGGLLVNFHPSILTCLLPQLTSPRLAVRKRTIIALGHLVMSCGNIVFVDLIEHLLSELSKNDSMSTTRTYIQCIAAISRQAGHRIGEYLEKIIPLVVKFCNVDDDELREYCIQAFESFVRRCPKEVYPHVSTIINICLKYLTYDPNYNYDDEDEDENAMDADGGDDDDQGSDDEYSDDDDMSWKVRRAAAKCLDAVVSTRHEMLPEFYKTVSPALIARFKEREENVKADVFHAYLSLLKQTRPVQSWLCDPDAMEQGDTPLTMLQSQVPNIVKALHKQMKEKSVKTRQCCFNMLTELVNVLPGALTQHIPVLVPGIIFSLNDKSSSSNLKIDALSCLYVILCNHSPQVFHPHVQALVPPVVACVGDPFYKITSEALLVTQQLVKVIRPLDQPSSFDATPYIKDLFTCTIKRLKAADIDQEVKERAISCMGQIICNLGDNLGPDLSNTLQIFLERLKNEITRLTTVKALTLIAGSPLKIDLRPVLGEGVPILASFLRKNQRALKLGTLSALDILIKNYSDSLTAAMIDAVLDELPPLISESDMHVSQMAISFLTTLAKVYPSSLSKISGSILNELIGLVRSPLLQGGALSAMLDFFQALVVTGTNNLGYMDLLRMLTGPVYSQSTALTHKQSYYSIAKCVAALTRACPKEGPAVVGQFIQDVKNSRSTDSIRLLALLSLGEVGHHIDLSGQLELKSVILEAFSSPSEEVKSAASYALGSISVGNLPEYLPFVLQEITSQPKRQYLLLHSLKEIISSASVAGLKPYVENIWALLLKHCECAEEGTRNVVAECLGKLTLIDPETLLPRLKGYLISGSSYARSSVVTAVKFTISDHPQPIDPLLKNCIGDFLKTLEDPDLNVRRVALVTFNSAAHNKPSLIRDLLDSVLPHLYNETKVRKELIREVEMGPFKHTVDDGLDIRKAAFECMYTLLDSCLDRLDIFEFLNHVEDGLKDHYDIKMLTFLMLVRLSTLCPSAVLQRLDRLVEPLRATCTTKVKANSVKQEFEKQDELKRSAMRAVAALLTIPEAEKSPLMSEFQSQISSNPELAAIFESIQKDSSSTNLESMDTS.

A2 is subject to N-acetylalanine. 12 HEAT repeats span residues 2–39, 44–81, 83–119, 131–165, 171–208, 210–247, 248–282, 289–366, 370–407, 424–467, 471–510, and 515–552; these read ASAS…KDSI, DSER…KVKE, QVET…ELPP, CKKI…LSRQ, NFHP…SCGN, VFVD…QAGH, RIGE…FESF, EVYP…TRHE, EFYK…QTRP, PLTM…VLPG, QHIP…NHSP, and PHVQ…VIRP. Residues 315–344 form a disordered region; that stretch reads DEDEDENAMDADGGDDDDQGSDDEYSDDDD. At S335 the chain carries Phosphoserine. At S558 the chain carries Phosphoserine. HEAT repeat units lie at residues 563 to 602, 606 to 643, 646 to 683, 688 to 725, 729 to 768, 770 to 808, 809 to 845, 852 to 889, 890 to 927, 928 to 960, 961 to 998, 1002 to 1039, 1043 to 1097, 1099 to 1133, and 1140 to 1189; these read PYIK…NLGD, PDLS…LKID, PVLG…NYSD, AMID…VYPS, KISG…TGTN, LGYM…ALTR, ACPK…LGEV, SGQL…GNLP, EYLP…GLKP, YVEN…KLTL, IDPE…DHPQ, PLLK…NKPS, DLLD…DSCL, RLDI…LSTL, and QRLD…IPEA. The residue at position 971 (K971) is an N6-acetyllysine.

It belongs to the CAND family. Interacts with TBP. Part of a complex that contains CUL1 and RBX1. Interacts with unneddylated cullins: interacts with CUL1, CUL2, CUL3, CUL4A, CUL4B and CUL5. Does not bind neddylated CUL1. Interaction with cullins is abolished in presence of COMMD1, which antagonizes with CAND1 for interacting with cullins. Interacts with ERCC6. Interacts with DCUN1D1, DCUN1D2, DCUN1D3, DCUN1D4 and DCUN1D5; these interactions are bridged by cullins and strongly inhibits the neddylation of cullins.

The protein resides in the cytoplasm. Its subcellular location is the nucleus. Key assembly factor of SCF (SKP1-CUL1-F-box protein) E3 ubiquitin ligase complexes that promotes the exchange of the substrate-recognition F-box subunit in SCF complexes, thereby playing a key role in the cellular repertoire of SCF complexes. Acts as a F-box protein exchange factor. The exchange activity of CAND1 is coupled with cycles of neddylation conjugation: in the deneddylated state, cullin-binding CAND1 binds CUL1-RBX1, increasing dissociation of the SCF complex and promoting exchange of the F-box protein. Probably plays a similar role in other cullin-RING E3 ubiquitin ligase complexes. In Mus musculus (Mouse), this protein is Cullin-associated NEDD8-dissociated protein 1 (Cand1).